Here is a 4660-residue protein sequence, read N- to C-terminus: Low-density lipoprotein receptor-related protein 2 (4660 aa).

The first 25 residues, methionine 1 to glycine 25, serve as a signal peptide directing secretion. The Extracellular segment spans residues glutamine 26–threonine 4425. LDL-receptor class A domains follow at residues glutamate 27 to proline 63, serine 66 to proline 104, threonine 107 to tyrosine 143, threonine 146 to threonine 180, leucine 182 to asparagine 218, threonine 221 to glutamate 257, and threonine 264 to glycine 307. Intrachain disulfides connect cysteine 28–cysteine 40, cysteine 35–cysteine 53, cysteine 47–cysteine 62, cysteine 67–cysteine 80, cysteine 74–cysteine 93, cysteine 87–cysteine 103, cysteine 108–cysteine 120, cysteine 115–cysteine 133, cysteine 127–cysteine 142, cysteine 147–cysteine 157, cysteine 152–cysteine 170, cysteine 164–cysteine 179, cysteine 183–cysteine 195, cysteine 190–cysteine 208, cysteine 202–cysteine 217, cysteine 222–cysteine 234, cysteine 229–cysteine 247, cysteine 241–cysteine 256, cysteine 265–cysteine 278, cysteine 272–cysteine 291, and cysteine 285–cysteine 306. 2 N-linked (GlcNAc...) asparagine glycosylation sites follow: asparagine 159 and asparagine 178. N-linked (GlcNAc...) asparagine glycosylation is found at asparagine 299, asparagine 340, asparagine 387, and asparagine 462. 4 LDL-receptor class B repeats span residues histidine 435–asparagine 477, asparagine 478–valine 520, glycine 521–serine 567, and lysine 568–histidine 612. Asparagine 657 carries an N-linked (GlcNAc...) asparagine glycan. 4 LDL-receptor class B repeats span residues serine 752–serine 794, arginine 795–alanine 836, glycine 837–threonine 880, and serine 881–asparagine 924. Asparagine 865 carries an N-linked (GlcNAc...) asparagine glycan. The LDL-receptor class A 8 domain occupies glutamine 1024 to glycine 1060. Cystine bridges form between cysteine 1025-cysteine 1037, cysteine 1032-cysteine 1050, and cysteine 1044-cysteine 1059. An N-linked (GlcNAc...) asparagine glycan is attached at asparagine 1063. 7 LDL-receptor class A domains span residues threonine 1065–proline 1102, threonine 1109–glutamine 1145, threonine 1149–valine 1185, asparagine 1187–proline 1224, methionine 1230–valine 1268, threonine 1271–proline 1307, and histidine 1312–asparagine 1350. Disulfide bonds link cysteine 1066–cysteine 1079, cysteine 1073–cysteine 1092, cysteine 1086–cysteine 1101, cysteine 1110–cysteine 1122, cysteine 1117–cysteine 1135, cysteine 1129–cysteine 1144, cysteine 1150–cysteine 1162, cysteine 1157–cysteine 1175, and cysteine 1169–cysteine 1184. 6 residues coordinate Ca(2+): tryptophan 1127, aspartate 1130, aspartate 1132, aspartate 1134, aspartate 1140, and glutamate 1141. The N-linked (GlcNAc...) asparagine glycan is linked to asparagine 1187. 18 disulfides stabilise this stretch: cysteine 1188/cysteine 1201, cysteine 1195/cysteine 1214, cysteine 1208/cysteine 1223, cysteine 1231/cysteine 1244, cysteine 1238/cysteine 1257, cysteine 1251/cysteine 1267, cysteine 1272/cysteine 1284, cysteine 1279/cysteine 1297, cysteine 1291/cysteine 1306, cysteine 1313/cysteine 1326, cysteine 1320/cysteine 1339, cysteine 1333/cysteine 1349, cysteine 1354/cysteine 1365, cysteine 1361/cysteine 1374, cysteine 1376/cysteine 1389, cysteine 1395/cysteine 1405, cysteine 1401/cysteine 1414, and cysteine 1416/cysteine 1429. Residues tyrosine 1206, aspartate 1209, valine 1211, aspartate 1213, aspartate 1219, and glutamate 1220 each coordinate Ca(2+). Residues asparagine 1328 and asparagine 1341 are each glycosylated (N-linked (GlcNAc...) asparagine). Residues asparagine 1350 to glutamate 1390 form the EGF-like 1 domain. Asparagine 1384 carries an N-linked (GlcNAc...) asparagine glycan. The EGF-like 2; calcium-binding domain maps to aspartate 1391–lysine 1430. N-linked (GlcNAc...) asparagine glycans are attached at residues asparagine 1451, asparagine 1497, and asparagine 1551. LDL-receptor class B repeat units lie at residues glycine 1479–glycine 1521, arginine 1522–methionine 1564, asparagine 1567–asparagine 1610, arginine 1611–serine 1655, and valine 1656–serine 1696. 3 N-linked (GlcNAc...) asparagine glycosylation sites follow: asparagine 1676, asparagine 1733, and asparagine 1811. LDL-receptor class B repeat units follow at residues glutamine 1791–serine 1833, arginine 1834–arginine 1883, glycine 1884–glutamate 1931, glutamine 1932–phenylalanine 1973, leucine 1974–arginine 2014, glycine 2108–alanine 2157, glycine 2158–histidine 2202, arginine 2203–threonine 2246, glycine 2247–serine 2290, and isoleucine 2291–histidine 2333. Residues asparagine 2131, asparagine 2134, asparagine 2178, and asparagine 2225 are each glycosylated (N-linked (GlcNAc...) asparagine). Asparagine 2396 carries N-linked (GlcNAc...) asparagine glycosylation. LDL-receptor class B repeat units follow at residues asparagine 2432–asparagine 2478, arginine 2479–arginine 2519, glycine 2520–threonine 2563, aspartate 2564–tyrosine 2605, and isoleucine 2606–threonine 2647. Asparagine 2488 and asparagine 2548 each carry an N-linked (GlcNAc...) asparagine glycan. LDL-receptor class A domains lie at arginine 2700 to alanine 2738, threonine 2741 to leucine 2777, serine 2780 to proline 2819, threonine 2822 to alanine 2861, threonine 2864 to glycine 2902, serine 2907 to glutamate 2946, asparagine 2949 to threonine 2991, alanine 2994 to serine 3030, proline 3033 to histidine 3071, and threonine 3076 to glycine 3112. 18 disulfides stabilise this stretch: cysteine 2701/cysteine 2713, cysteine 2708/cysteine 2726, cysteine 2720/cysteine 2737, cysteine 2742/cysteine 2754, cysteine 2749/cysteine 2767, cysteine 2761/cysteine 2776, cysteine 2781/cysteine 2794, cysteine 2789/cysteine 2807, cysteine 2801/cysteine 2818, cysteine 2823/cysteine 2836, cysteine 2830/cysteine 2849, cysteine 2843/cysteine 2860, cysteine 2865/cysteine 2878, cysteine 2872/cysteine 2891, cysteine 2885/cysteine 2901, cysteine 2908/cysteine 2920, cysteine 2915/cysteine 2933, and cysteine 2927/cysteine 2945. N-linked (GlcNAc...) asparagine glycosylation occurs at asparagine 2782. N-linked (GlcNAc...) asparagine glycosylation is present at asparagine 2810. The N-linked (GlcNAc...) asparagine glycan is linked to asparagine 2949. Intrachain disulfides connect cysteine 2950/cysteine 2967, cysteine 2957/cysteine 2980, cysteine 2974/cysteine 2990, cysteine 2995/cysteine 3007, cysteine 3002/cysteine 3020, cysteine 3014/cysteine 3029, cysteine 3034/cysteine 3046, cysteine 3041/cysteine 3059, cysteine 3053/cysteine 3070, cysteine 3077/cysteine 3089, cysteine 3084/cysteine 3102, cysteine 3096/cysteine 3111, cysteine 3116/cysteine 3128, cysteine 3124/cysteine 3137, cysteine 3139/cysteine 3152, cysteine 3158/cysteine 3169, cysteine 3165/cysteine 3178, and cysteine 3180/cysteine 3193. N-linked (GlcNAc...) asparagine glycosylation is present at asparagine 2989. Positions glycine 3112–valine 3153 constitute an EGF-like 3 domain. Asparagine 3127 is a glycosylation site (N-linked (GlcNAc...) asparagine). The EGF-like 4; calcium-binding domain maps to aspartate 3154–arginine 3194. N-linked (GlcNAc...) asparagine glycans are attached at residues asparagine 3213, asparagine 3259, asparagine 3317, and asparagine 3357. 5 LDL-receptor class B repeats span residues glutamate 3241 to serine 3283, arginine 3284 to arginine 3326, glycine 3335 to asparagine 3378, aspartate 3379 to threonine 3421, and valine 3422 to tyrosine 3462. Residue asparagine 3448 is glycosylated (N-linked (GlcNAc...) asparagine). LDL-receptor class A domains lie at methionine 3513 to proline 3551, phenylalanine 3554 to glutamate 3592, arginine 3595 to alanine 3633, threonine 3636 to methionine 3674, asparagine 3679 to glutamate 3717, proline 3720 to valine 3757, glutamate 3760 to glutamate 3796, and threonine 3799 to proline 3835. 24 disulfides stabilise this stretch: cysteine 3514/cysteine 3527, cysteine 3521/cysteine 3540, cysteine 3534/cysteine 3550, cysteine 3555/cysteine 3567, cysteine 3562/cysteine 3580, cysteine 3574/cysteine 3591, cysteine 3596/cysteine 3608, cysteine 3603/cysteine 3621, cysteine 3615/cysteine 3632, cysteine 3637/cysteine 3649, cysteine 3644/cysteine 3662, cysteine 3656/cysteine 3673, cysteine 3680/cysteine 3694, cysteine 3688/cysteine 3707, cysteine 3701/cysteine 3716, cysteine 3721/cysteine 3734, cysteine 3729/cysteine 3747, cysteine 3741/cysteine 3756, cysteine 3761/cysteine 3773, cysteine 3768/cysteine 3786, cysteine 3780/cysteine 3795, cysteine 3800/cysteine 3812, cysteine 3807/cysteine 3825, and cysteine 3819/cysteine 3834. A glycan (N-linked (GlcNAc...) asparagine) is linked at asparagine 3566. A glycan (N-linked (GlcNAc...) asparagine) is linked at asparagine 3682. An N-linked (GlcNAc...) asparagine glycan is attached at asparagine 3840. LDL-receptor class A domains are found at residues tyrosine 3843–phenylalanine 3881, proline 3884–arginine 3923, and proline 3929–asparagine 3965. 9 disulfides stabilise this stretch: cysteine 3844–cysteine 3856, cysteine 3851–cysteine 3869, cysteine 3863–cysteine 3880, cysteine 3885–cysteine 3898, cysteine 3893–cysteine 3911, cysteine 3905–cysteine 3922, cysteine 3930–cysteine 3942, cysteine 3937–cysteine 3955, and cysteine 3949–cysteine 3964. Residues asparagine 3969 and asparagine 3980 are each glycosylated (N-linked (GlcNAc...) asparagine). Residues aspartate 4009–alanine 4050 enclose the EGF-like 5; calcium-binding domain. Cystine bridges form between cysteine 4013–cysteine 4023, cysteine 4019–cysteine 4032, and cysteine 4034–cysteine 4049. An N-linked (GlcNAc...) asparagine glycan is attached at asparagine 4070. LDL-receptor class B repeat units follow at residues arginine 4156–leucine 4198, glycine 4199–asparagine 4242, and aspartate 4244–glutamine 4285. Residue asparagine 4329 is glycosylated (N-linked (GlcNAc...) asparagine). In terms of domain architecture, EGF-like 6 spans methionine 4379–glutamate 4413. 3 disulfide bridges follow: cysteine 4383-cysteine 4391, cysteine 4385-cysteine 4401, and cysteine 4403-cysteine 4412. A helical transmembrane segment spans residues methionine 4426 to phenylalanine 4446. Topologically, residues phenylalanine 4447–valine 4660 are cytoplasmic. The SH3-binding motif lies at serine 4454–proline 4463. The PxLPxI/L motif 1; mediates interaction with ANKRA2 motif lies at proline 4457–leucine 4462. The short motif at proline 4460–leucine 4465 is the PxLPxI/L motif 2; mediates interaction with ANKRA2 element. Phosphoserine occurs at positions 4464 and 4467. The Endocytosis signal motif lies at phenylalanine 4522 to tyrosine 4527. Residues glutamine 4558–valine 4660 are disordered. Serine 4577 carries the phosphoserine modification. An interaction with DAB2 region spans residues glutamine 4597–aspartate 4610. The short motif at asparagine 4603–tyrosine 4606 is the NPXY motif element. Residues tyrosine 4606–methionine 4609 carry the SH2-binding motif. The short motif at valine 4619–lysine 4630 is the SH3-binding element. Serine 4624 carries the post-translational modification Phosphoserine. Residues leucine 4627–serine 4636 are compositionally biased toward low complexity. Phosphothreonine is present on threonine 4637. Serine 4658 is modified (phosphoserine).

The protein belongs to the LDLR family. In terms of assembly, binds plasminogen, extracellular matrix components, plasminogen activator-plasminogen activator inhibitor type I complex, apolipoprotein E-enriched beta-VLDL, lipoprotein lipase, lactoferrin, CLU/clusterin and calcium. Forms a multimeric complex together with LRPAP1. Interacts (via PxLPxI/L motif) with ANKRA2 (via ankyrin repeats). Interacts with LRP2BP. Interacts (via NPXY motif) with DAB2; the interaction is not affected by tyrosine phosphorylation of the NPXY motif. Interacts with MB. Interacts with BMP4. Interacts with the Sonic hedgehog protein N-product which is the active product of SHH. Interacts with CST3 in a calcium-dependent manner. Interacts with the vitamin-D binding protein GC/DBP. Interacts with sex hormone-binding protein SHBG. Interacts with angiotensin-2. Also interacts with angiotensin 1-7. Interacts with APOM. Interacts with selenoprotein SEPP1. Interacts with LEP. Interacts with ALB. Interacts with the antiapoptotic protein BIRC5/survivin. Interacts with matrix metalloproteinase MMP2 in complex with metalloproteinase inhibitor TIMP1. In neurons, forms a trimeric complex with APP and APPB1/FE65. Interacts with LDLRAP1/ARH; mediates trafficking of LRP2 to the endocytic recycling compartment. Does not interact with beta-amyloid protein 40 alone but interacts with the complex composed of beta-amyloid protein 40 and CLU/APOJ. Interacts with MDK. A fraction undergoes proteolytic cleavage of the extracellular domain at the cell membrane to generate a cytoplasmic tail fragment. This is internalized into the early endosome from where it trafficks in an LDLRAP1/ARH-dependent manner to the endocytic recycling compartment (ERC). In the ERC, it is further cleaved by gamma-secretase to release a fragment which translocates to the nucleus and mediates transcriptional repression. In terms of processing, N-glycosylation is required for ligand binding. Contains core-fucosylated N-glycans in kidney proximal convoluted tubules (PCTs) and hybrid-type N-glycans in proximal straight tubules (PSTs). Interacts with ligands in a glycoform-dependent manner. Retinol-binding protein and the vitamin D carrier GC/DBP are endocytosed primarily by PCTs, albumin is endocytosed equally by PCTs and PSTs, and the aminoglycoside kanamycin is endocytosed primarily by PSTs. In the inner ear, strongly expressed in the marginal cells of the stria vascularis (at protein level). In the female reproductive tract, expressed on the luminal side of the uterine epithelium (at protein level). In the adult brain, expressed in ependymal cells of the lateral ventricles where expression is restricted to the ependyma that faces the stem cell niche (at protein level). Expressed in neurons throughout the brain including in the hippocampus, limbic cortices and cerebellum (at protein level). In the developing optic nerve, expressed exclusively in astrocytes at 14.5 dpc, 16.5 dpc and 18.5 dpc (at protein level).

It localises to the apical cell membrane. It is found in the endosome lumen. The protein localises to the membrane. Its subcellular location is the coated pit. The protein resides in the cell projection. It localises to the dendrite. It is found in the axon. Its function is as follows. Multiligand endocytic receptor. Acts together with CUBN to mediate endocytosis of high-density lipoproteins. Mediates receptor-mediated uptake of polybasic drugs such as aprotinin, aminoglycosides and polymyxin B. In the kidney, mediates the tubular uptake and clearance of leptin. Also mediates transport of leptin across the blood-brain barrier through endocytosis at the choroid plexus epithelium. Endocytosis of leptin in neuronal cells is required for hypothalamic leptin signaling and leptin-mediated regulation of feeding and body weight. Mediates endocytosis and subsequent lysosomal degradation of CST3 in kidney proximal tubule cells. Mediates renal uptake of 25-hydroxyvitamin D3 in complex with the vitamin D3 transporter GC/DBP. Mediates renal uptake of metallothionein-bound heavy metals. Together with CUBN, mediates renal reabsorption of myoglobin. Mediates renal uptake and subsequent lysosomal degradation of APOM. Plays a role in kidney selenium homeostasis by mediating renal endocytosis of selenoprotein SEPP1. Mediates renal uptake of the antiapoptotic protein BIRC5/survivin which may be important for functional integrity of the kidney. Mediates renal uptake of matrix metalloproteinase MMP2 in complex with metalloproteinase inhibitor TIMP1. Mediates endocytosis of Sonic hedgehog protein N-product (ShhN), the active product of SHH. Also mediates ShhN transcytosis. In the embryonic neuroepithelium, mediates endocytic uptake and degradation of BMP4, is required for correct SHH localization in the ventral neural tube and plays a role in patterning of the ventral telencephalon. Required at the onset of neurulation to sequester SHH on the apical surface of neuroepithelial cells of the rostral diencephalon ventral midline and to control PTCH1-dependent uptake and intracellular trafficking of SHH. During neurulation, required in neuroepithelial cells for uptake of folate bound to the folate receptor FOLR1 which is necessary for neural tube closure. In the adult brain, negatively regulates BMP signaling in the subependymal zone which enables neurogenesis to proceed. In astrocytes, mediates endocytosis of ALB which is required for the synthesis of the neurotrophic factor oleic acid. Involved in neurite branching. During optic nerve development, required for SHH-mediated migration and proliferation of oligodendrocyte precursor cells. Mediates endocytic uptake and clearance of SHH in the retinal margin which protects retinal progenitor cells from mitogenic stimuli and keeps them quiescent. Plays a role in reproductive organ development by mediating uptake in reproductive tissues of androgen and estrogen bound to the sex hormone binding protein SHBG. Mediates endocytosis of angiotensin-2. Also mediates endocytosis of angiotensin 1-7. Binds to the complex composed of beta-amyloid protein 40 and CLU/APOJ and mediates its endocytosis and lysosomal degradation. Required for embryonic heart development. Required for normal hearing, possibly through interaction with estrogen in the inner ear. In Mus musculus (Mouse), this protein is Low-density lipoprotein receptor-related protein 2 (Lrp2).